A 645-amino-acid polypeptide reads, in one-letter code: Pro-neuregulin-1, membrane-bound isoform (645 aa).

Residues 1 to 19 constitute a propeptide that is removed on maturation; the sequence is MSERKEGRGKGKGKKKDRG. The interval 1-52 is disordered; the sequence is MSERKEGRGKGKGKKKDRGSRGKPAPAEGDPSPALPPRLKEMKSQESAAGSK. Topologically, residues 20 to 247 are extracellular; that stretch reads SRGKPAPAEG…MEAEELYQKR (228 aa). In terms of domain architecture, Ig-like C2-type spans 37 to 128; that stretch reads PRLKEMKSQE…GNDSASANIT (92 aa). Cysteines 57 and 112 form a disulfide. Positions 139-164 are enriched in polar residues; the sequence is MSASTERPYVSSESPIRISVSTEGAN. The tract at residues 139-175 is disordered; sequence MSASTERPYVSSESPIRISVSTEGANTSSSTSTSTTG. The span at 165-175 shows a compositional bias: low complexity; that stretch reads TSSSTSTSTTG. One can recognise an EGF-like domain in the interval 178–222; the sequence is HLIKCAEKEKTFCVNGGECFMVKDLSNPSRYLCKCPNEFTGDRCQ. Disulfide bonds link C182–C196, C190–C210, and C212–C221. A helical membrane pass occupies residues 248-268; the sequence is VLTITGICIALLVVGIMCVVA. The Cytoplasmic segment spans residues 269–645; sequence YCKTKKQRQK…VIANQDPIAV (377 aa). Over residues 340 to 355 the composition is skewed to low complexity; the sequence is SHYTSTAHHSTTVTQT. 4 disordered regions span residues 340 to 364, 380 to 406, 433 to 463, and 531 to 593; these read SHYT…SNGH, SVEN…PREC, MTTP…PVSS, and ETTQ…DTPF. Over residues 392–402 the composition is skewed to gly residues; the sequence is GPRGRLHGLGG. Over residues 547–557 the composition is skewed to basic residues; the sequence is TNSRRAKRTKP. Low complexity predominate over residues 568–579; that stretch reads DSNPSSVSSNSE.

It belongs to the neuregulin family. In terms of assembly, the cytoplasmic domain interacts with the LIM domain region of LIMK1. Forms a ternary complex with ERBB3 and ITGAV:ITGB3 or ITGA6:ITGB4. Interacts with NRDC and BACE1. Proteolytic cleavage close to the plasma membrane on the external face leads to the release of the soluble growth factor form. Post-translationally, N- and O-glycosylated. Extensive glycosylation precedes the proteolytic cleavage.

The protein localises to the cell membrane. It localises to the secreted. Direct ligand for ERBB3 and ERBB4 tyrosine kinase receptors. Concomitantly recruits ERBB1 and ERBB2 coreceptors, resulting in ligand-stimulated tyrosine phosphorylation and activation of the ERBB receptors. Perform diverse functions such as inducing growth and differentiation of epithelial, glial, neuronal, and skeletal muscle cells; inducing expression of acetylcholine receptor in synaptic vesicles during the formation of the neuromuscular junction; stimulating lobuloalveolar budding and milk production in the mammary gland and inducing differentiation of mammary tumor cells; stimulating Schwann cell proliferation; implication in the development of the myocardium such as trabeculation of the developing heart. Binds to ERBB4 and ERBB3. Acts as a ligand for integrins and binds (via EGF domain) to integrins ITGAV:ITGB3 or ITGA6:ITGB4. Its binding to integrins and subsequent ternary complex formation with integrins and ERRB3 are essential for NRG1-ERBB signaling. Induces the phosphorylation and activation of MAPK3/ERK1, MAPK1/ERK2 and AKT1, and ligand-dependent ERBB4 endocytosis is essential for the NRG1-mediated activation of these kinases in neurons. In Mus musculus (Mouse), this protein is Pro-neuregulin-1, membrane-bound isoform.